The chain runs to 218 residues: Protein-methionine-sulfoxide reductase heme-binding subunit MsrQ (218 aa).

A run of 5 helical transmembrane segments spans residues 14–34 (AVHA…WQVW), 60–80 (LLLI…AVLI), 86–106 (LGLY…WLDL), 121–141 (PYIT…ITST), and 155–175 (LHML…WLVK).

It belongs to the MsrQ family. In terms of assembly, heterodimer of a catalytic subunit (MsrP) and a heme-binding subunit (MsrQ). Requires FMN as cofactor. The cofactor is heme b.

The protein localises to the cell inner membrane. Part of the MsrPQ system that repairs oxidized periplasmic proteins containing methionine sulfoxide residues (Met-O), using respiratory chain electrons. Thus protects these proteins from oxidative-stress damage caused by reactive species of oxygen and chlorine generated by the host defense mechanisms. MsrPQ is essential for the maintenance of envelope integrity under bleach stress, rescuing a wide series of structurally unrelated periplasmic proteins from methionine oxidation. MsrQ provides electrons for reduction to the reductase catalytic subunit MsrP, using the quinone pool of the respiratory chain. The chain is Protein-methionine-sulfoxide reductase heme-binding subunit MsrQ from Xanthomonas campestris pv. campestris (strain B100).